We begin with the raw amino-acid sequence, 378 residues long: Acetylornithine deacetylase (378 aa).

Histidine 76 is a binding site for Zn(2+). Aspartate 78 is a catalytic residue. Aspartate 108 serves as a coordination point for Zn(2+). Glutamate 140 is a catalytic residue. The Zn(2+) site is built by glutamate 141, glutamate 165, and histidine 351.

This sequence belongs to the peptidase M20A family. ArgE subfamily. Homodimer. Requires Zn(2+) as cofactor. The cofactor is Co(2+). Glutathione serves as cofactor.

The protein localises to the cytoplasm. It catalyses the reaction N(2)-acetyl-L-ornithine + H2O = L-ornithine + acetate. Its pathway is amino-acid biosynthesis; L-arginine biosynthesis; L-ornithine from N(2)-acetyl-L-ornithine (linear): step 1/1. Its function is as follows. Catalyzes the hydrolysis of the amide bond of N(2)-acetylated L-amino acids. Cleaves the acetyl group from N-acetyl-L-ornithine to form L-ornithine, an intermediate in L-arginine biosynthesis pathway, and a branchpoint in the synthesis of polyamines. This is Acetylornithine deacetylase from Vibrio vulnificus (strain CMCP6).